A 1101-amino-acid polypeptide reads, in one-letter code: Carbamoyl phosphate synthase large chain (1101 aa).

The segment at 1 to 402 (MPKRTDLKSV…ALQKALRSLE (402 aa)) is carboxyphosphate synthetic domain. Residues R129, R169, G175, G176, E208, I210, E215, G241, V242, H243, Q285, and E299 each contribute to the ATP site. One can recognise an ATP-grasp 1 domain in the interval 133–328 (KGVVERAGGE…IAKIATKLAL (196 aa)). Mg(2+) is bound by residues Q285, E299, and N301. The Mn(2+) site is built by Q285, E299, and N301. The oligomerization domain stretch occupies residues 403–544 (QKGSELAFPQ…YRYSSYDLET (142 aa)). The tract at residues 545–947 (EVAPHEGESV…AFAKSQSAAG (403 aa)) is carbamoyl phosphate synthetic domain. The ATP-grasp 2 domain occupies 675 to 866 (ALVLERAGLV…LAKAAARIGV (192 aa)). The ATP site is built by R711, R750, L752, E757, G782, I783, H784, S785, Q825, and E837. Positions 825, 837, and 839 each coordinate Mg(2+). The Mn(2+) site is built by Q825, E837, and N839. One can recognise an MGS-like domain in the interval 948–1093 (GPLPTSGRVF…QEHDARLQQA (146 aa)). The allosteric domain stretch occupies residues 948-1101 (GPLPTSGRVF…QAVAGPEAAA (154 aa)).

The protein belongs to the CarB family. Composed of two chains; the small (or glutamine) chain promotes the hydrolysis of glutamine to ammonia, which is used by the large (or ammonia) chain to synthesize carbamoyl phosphate. Tetramer of heterodimers (alpha,beta)4. Mg(2+) is required as a cofactor. The cofactor is Mn(2+).

It carries out the reaction hydrogencarbonate + L-glutamine + 2 ATP + H2O = carbamoyl phosphate + L-glutamate + 2 ADP + phosphate + 2 H(+). It catalyses the reaction hydrogencarbonate + NH4(+) + 2 ATP = carbamoyl phosphate + 2 ADP + phosphate + 2 H(+). It participates in amino-acid biosynthesis; L-arginine biosynthesis; carbamoyl phosphate from bicarbonate: step 1/1. The protein operates within pyrimidine metabolism; UMP biosynthesis via de novo pathway; (S)-dihydroorotate from bicarbonate: step 1/3. In terms of biological role, large subunit of the glutamine-dependent carbamoyl phosphate synthetase (CPSase). CPSase catalyzes the formation of carbamoyl phosphate from the ammonia moiety of glutamine, carbonate, and phosphate donated by ATP, constituting the first step of 2 biosynthetic pathways, one leading to arginine and/or urea and the other to pyrimidine nucleotides. The large subunit (synthetase) binds the substrates ammonia (free or transferred from glutamine from the small subunit), hydrogencarbonate and ATP and carries out an ATP-coupled ligase reaction, activating hydrogencarbonate by forming carboxy phosphate which reacts with ammonia to form carbamoyl phosphate. The sequence is that of Carbamoyl phosphate synthase large chain from Micrococcus luteus (strain ATCC 4698 / DSM 20030 / JCM 1464 / CCM 169 / CCUG 5858 / IAM 1056 / NBRC 3333 / NCIMB 9278 / NCTC 2665 / VKM Ac-2230) (Micrococcus lysodeikticus).